A 491-amino-acid polypeptide reads, in one-letter code: Probable glycine dehydrogenase (decarboxylating) subunit 2 (491 aa).

Lys273 bears the N6-(pyridoxal phosphate)lysine mark.

The protein belongs to the GcvP family. C-terminal subunit subfamily. In terms of assembly, the glycine cleavage system is composed of four proteins: P, T, L and H. In this organism, the P 'protein' is a heterodimer of two subunits. The cofactor is pyridoxal 5'-phosphate.

The enzyme catalyses N(6)-[(R)-lipoyl]-L-lysyl-[glycine-cleavage complex H protein] + glycine + H(+) = N(6)-[(R)-S(8)-aminomethyldihydrolipoyl]-L-lysyl-[glycine-cleavage complex H protein] + CO2. In terms of biological role, the glycine cleavage system catalyzes the degradation of glycine. The P protein binds the alpha-amino group of glycine through its pyridoxal phosphate cofactor; CO(2) is released and the remaining methylamine moiety is then transferred to the lipoamide cofactor of the H protein. The polypeptide is Probable glycine dehydrogenase (decarboxylating) subunit 2 (Bacillus anthracis (strain A0248)).